A 143-amino-acid chain; its full sequence is ATP synthase F(0) complex subunit C2, mitochondrial (143 aa).

The transit peptide at 1–68 (MYTCAKFVST…RSFQTSAISR (68 aa)) directs the protein to the mitochondrion. The chain crosses the membrane as a helical span at residues 84–104 (VGVAGSGAGIGTVFGSLIIGY). Lys-111 bears the N6,N6,N6-trimethyllysine mark. A helical transmembrane segment spans residues 119 to 139 (ILGFALSEAMGLFCLMVAFLI).

The protein belongs to the ATPase C chain family. F-type ATPases have 2 components, CF(1) - the catalytic core - and CF(0) - the membrane proton channel. CF(1) has five subunits: alpha(3), beta(3), gamma(1), delta(1), epsilon(1). CF(0) has three main subunits: a, b and c. Interacts with DNAJC30; interaction is direct. Post-translationally, trimethylated by ATPSCKMT at Lys-111. Methylation is required for proper incorporation of the C subunit into the ATP synthase complex and mitochondrial respiration.

Its subcellular location is the mitochondrion membrane. Mitochondrial membrane ATP synthase (F(1)F(0) ATP synthase or Complex V) produces ATP from ADP in the presence of a proton gradient across the membrane which is generated by electron transport complexes of the respiratory chain. F-type ATPases consist of two structural domains, F(1) - containing the extramembraneous catalytic core and F(0) - containing the membrane proton channel, linked together by a central stalk and a peripheral stalk. During catalysis, ATP synthesis in the catalytic domain of F(1) is coupled via a rotary mechanism of the central stalk subunits to proton translocation. Part of the complex F(0) domain. A homomeric c-ring of probably 10 subunits is part of the complex rotary element. The protein is ATP synthase F(0) complex subunit C2, mitochondrial of Bos taurus (Bovine).